The chain runs to 863 residues: Scm-like with four MBT domains protein 1 (863 aa).

MBT repeat units follow at residues 20-120 (FSWE…LEAP), 128-232 (SDWS…LQPP), 242-346 (ADWQ…INPP), and 354-451 (FDWA…LSTP). The segment at 638–773 (KKKNKRIGRP…SDGENKPPSP (136 aa)) is disordered. Residues 660-679 (KTSKRRKRRKNIFVHKKKRS) are compositionally biased toward basic residues. The span at 680 to 691 (SASVDNTPVGSP) shows a compositional bias: polar residues. The segment covering 696 to 710 (GEDEDDADDGDDDSL) has biased composition (acidic residues). A phosphoserine mark is found at S764 and S772. Residues 793–861 (WSVADVVRFI…RIKFAFYEQF (69 aa)) form the SAM domain.

Interacts with MYOD1. Component of the SLC (SFMBT1-LSD1-CoREST) corepressor complex, which also contains KDM1A/LSD1 and RCOR1/CoREST. Interacts with KDM1A/LSD1 and RCOR1/CoREST. Interacts with MYOD1. Interacts with L3MBTL3. As to expression, highly expressed in the testis, low expression was detected in brain, kidney, heart and lung.

The protein resides in the nucleus. In terms of biological role, histone-binding protein, which is part of various corepressor complexes. Mediates the recruitment of corepressor complexes to target genes, followed by chromatin compaction and repression of transcription. Plays a role during myogenesis: required for the maintenance of undifferentiated states of myogenic progenitor cells via interaction with MYOD1. Interaction with MYOD1 leads to the recruitment of associated corepressors and silencing of MYOD1 target genes. Part of the SLC complex in germ cells, where it may play a role during spermatogenesis. The chain is Scm-like with four MBT domains protein 1 (Sfmbt1) from Rattus norvegicus (Rat).